The sequence spans 647 residues: DNA polymerase subunit gamma-1 (647 aa).

The disordered stretch occupies residues 116-147 (ERPGRAEQSQMQDEDGLPELVEESSQPSFHHG). Over residues 127–137 (QDEDGLPELVE) the composition is skewed to acidic residues.

This sequence belongs to the DNA polymerase type-A family. Heterotrimer composed of a catalytic subunit and a homodimer of accessory subunits. Interacts with TTC3. Mg(2+) serves as cofactor.

It localises to the mitochondrion. Its subcellular location is the mitochondrion matrix. The protein localises to the mitochondrion nucleoid. It catalyses the reaction DNA(n) + a 2'-deoxyribonucleoside 5'-triphosphate = DNA(n+1) + diphosphate. Its function is as follows. Involved in the replication of mitochondrial DNA. Associates with mitochondrial DNA. This is DNA polymerase subunit gamma-1 (POLG) from Gallus gallus (Chicken).